We begin with the raw amino-acid sequence, 246 residues long: MSKLSVFFIFLFCSIATAAESLPDLKIEKLDEGVYVHTSFEEVNGWGVVPKHGLVVLVNAEAYLIDTPFTAKDTEKLVTWFVERGYKIKGSISSHFHSDSTGGIEWLNSRSIPTYASELTNELLKKDGKVQATNSFSGVNYWLVKNKIEVFYPGPGHTPDNVVVWLPERKILFGGCFIKPYGLGNLGDANIEAWPKSAKLLKSKYGKAKLVVPSHSEVGDASLLKLTLEQAVKGLNESKKPSKPSN.

A signal peptide spans 1-18; sequence MSKLSVFFIFLFCSIATA. Residues His95, His97, Asp99, His157, and Cys176 each contribute to the Zn(2+) site. Lys179 and Asn185 together coordinate a beta-lactam. His215 contributes to the Zn(2+) binding site.

It belongs to the metallo-beta-lactamase superfamily. Class-B beta-lactamase family. In terms of assembly, monomer. The cofactor is Zn(2+).

Its subcellular location is the periplasm. It catalyses the reaction a beta-lactam + H2O = a substituted beta-amino acid. Inhibited by captopril stereoisomers, Hg(2+), Fe(2+), Cu(2+), chelating agents such as EDTA, dansyl derivatives, including dansyl-C4SH, bisthiazolidines, mercaptoacetic acid and by PMPC phosphonates. Inhibited by 3-(3-mercaptopropionylsulfanyl)-propionic acid pentafluorophenyl ester, via a covalent binding to Lys-179. Not susceptible to inactivation by the beta-lactamase-blocking agents clavulanic acid or cloxacillin. Class B beta-lactamase which confers resistance to the beta-lactam antibiotics, including penicillins, cephalosporins and carbapenems. Acts via hydrolysis of the beta-lactam ring. Has penicillin-, cephalosporin- and carbapenem-hydrolyzing activities. Has endoribonuclease activity, cleaving substrate RNAs preferentially between U/C and A, in vitro. In Serratia marcescens, this protein is Metallo-beta-lactamase IMP-1.